We begin with the raw amino-acid sequence, 179 residues long: Putative endogenous retrovirus group FC1 Env polyprotein (179 aa).

Positions 1–22 (MARPSPLCLLLLLTLLPPIVPS) are cleaved as a signal peptide. The tract at residues 23 to 179 (NSLLTEPPFR…SKLRIFRTYV (157 aa)) is truncated surface protein. Asn69 carries N-linked (GlcNAc...) asparagine glycosylation.

Belongs to the gamma type-C retroviral envelope protein family. HERV class-I F(c)1 env subfamily.

It is found in the virion. In terms of biological role, retroviral envelope proteins mediate receptor recognition and membrane fusion during early infection. Endogenous envelope proteins may have kept, lost or modified their original function during evolution. The polypeptide is Putative endogenous retrovirus group FC1 Env polyprotein (ERVFC1) (Gorilla gorilla gorilla (Western lowland gorilla)).